Reading from the N-terminus, the 588-residue chain is Disabled homolog 1 (588 aa).

The interval 1 to 26 (MSTETELQVAVKTSAKKDSRKKGQDR) is disordered. Basic and acidic residues predominate over residues 15–26 (AKKDSRKKGQDR). The PID domain maps to 36–189 (KGEGVRYKAK…CEQAVYQTIL (154 aa)). 3 positions are modified to phosphotyrosine: Tyr-198, Tyr-220, and Tyr-232. 4 disordered regions span residues 224–243 (TSQK…NSQP), 420–444 (LATV…QKMG), 451–470 (FQMV…PSLT), and 502–588 (LTPV…QDGS). Residues 424-436 (PGTNDSARSSPQS) show a composition bias toward polar residues. 2 stretches are compositionally biased toward low complexity: residues 503–512 (TPVTSTTPST) and 523–534 (SSPSKSSASHVS). The residue at position 524 (Ser-524) is a Phosphoserine; by CDK5. The segment covering 537–546 (TADDIFEEGF) has biased composition (acidic residues).

Associates with the SH2 domains of SRC, FYN and ABL. Interacts (phosphorylated on tyrosine residues) with CRK and CRKL (via respective SH2 domain). Interacts with SIAH1, LRP8 and VLDLR. Interacts with LRP1. Interacts with APLP1 (via NPXY motif). Interacts with DAB2IP. Interacts with ZSWIM8. Post-translationally, phosphorylated by FYN on Tyr-198 and Tyr-220 upon reelin induction in embryonic neurons. Also found phosphorylated on Tyr-232 upon reelin induction. Also phosphorylated on Ser-524 independently of reelin signaling. Ubiquitinated by various cullin-5-RING E3 ubiquitin-protein ligase complexes (ECS complexes) following ligand-binding and phosphorylation, leading to its degradation. Ubiquitinated by the ECS(SOCS7) complex in the cortical plate of the developing cerebral cortex following ligand-binding and phosphorylation by FYN, leading to its degradation by the proteasome. Recognized by ZSWIM8 through a disorder targets misorder mechanism that eliminates misfolded DAB1 via ubiquitination and proteasomal degradation. Expressed mainly in brain. Specifically expressin in cortical neurons.

It is found in the cytoplasm. Signaling adapter of the reelin-mediated signaling pathway, which regulates the migration and differentiation of postmitotic neurons during brain development. Mediates intracellular transduction of Reelin signaling following reelin (RELN)-binding to its receptor: acts by docking proteins through its phosphotyrosine residues and PID domain. In Mus musculus (Mouse), this protein is Disabled homolog 1.